We begin with the raw amino-acid sequence, 330 residues long: Small ribosomal subunit protein uS2 (330 aa).

Belongs to the universal ribosomal protein uS2 family.

This chain is Small ribosomal subunit protein uS2, found in Bradyrhizobium sp. (strain BTAi1 / ATCC BAA-1182).